The following is a 385-amino-acid chain: Acetate kinase (385 aa).

Mg(2+) is bound at residue Asn9. Residue Lys16 participates in ATP binding. Substrate is bound at residue Arg87. Asp144 acts as the Proton donor/acceptor in catalysis. ATP is bound by residues His202–Gly206 and Asp277–Arg279. Position 373 (Glu373) interacts with Mg(2+).

The protein belongs to the acetokinase family. As to quaternary structure, homodimer. The cofactor is Mg(2+). Mn(2+) serves as cofactor.

Its subcellular location is the cytoplasm. It catalyses the reaction acetate + ATP = acetyl phosphate + ADP. Its pathway is metabolic intermediate biosynthesis; acetyl-CoA biosynthesis; acetyl-CoA from acetate: step 1/2. Catalyzes the formation of acetyl phosphate from acetate and ATP. Can also catalyze the reverse reaction. In Rickettsia akari (strain Hartford), this protein is Acetate kinase.